The chain runs to 120 residues: Adenosylhomocysteinase (120 aa).

Asn34 lines the NAD(+) pocket.

The protein belongs to the adenosylhomocysteinase family. Requires NAD(+) as cofactor.

The protein localises to the cytoplasm. It catalyses the reaction S-adenosyl-L-homocysteine + H2O = L-homocysteine + adenosine. It functions in the pathway amino-acid biosynthesis; L-homocysteine biosynthesis; L-homocysteine from S-adenosyl-L-homocysteine: step 1/1. May play a key role in the regulation of the intracellular concentration of adenosylhomocysteine. This is Adenosylhomocysteinase (ahcY) from Streptomyces fradiae (Streptomyces roseoflavus).